Reading from the N-terminus, the 190-residue chain is UPF0301 protein Pfl01_5311 (190 aa).

This sequence belongs to the UPF0301 (AlgH) family.

The chain is UPF0301 protein Pfl01_5311 from Pseudomonas fluorescens (strain Pf0-1).